We begin with the raw amino-acid sequence, 581 residues long: mRNA-decapping enzyme 1B (581 aa).

The residue at position 145 (Ser145) is a Phosphoserine. 2 disordered regions span residues 181–222 and 236–258; these read QISS…PEPQ and APCQ…PEKF. The span at 204–219 shows a compositional bias: polar residues; the sequence is GSRQQRGPRPGQTSDP. The span at 244–255 shows a compositional bias: low complexity; sequence PPQTLPLQQQQP. 2 positions are modified to phosphoserine: Ser269 and Ser326. The segment at 349–411 is disordered; sequence AENRCEPGAP…HQPVTGPGEV (63 aa). Residues 355-367 show a composition bias toward low complexity; it reads PGAPAPASSATTP. A Phosphothreonine modification is found at Thr366. The span at 368-381 shows a compositional bias: polar residues; the sequence is VSLAQPTRLSSALP. The segment covering 382–401 has biased composition (pro residues); it reads PQTPGPRALPRPAPPGPGPG. Ser412 carries the phosphoserine modification. The tract at residues 427–468 is disordered; that stretch reads QQLPAPGRPALAAKFPTATLSTRARNPLEPWRDPPPSTEQPA. At Ser475 the chain carries Phosphoserine. Residues 498-522 form a disordered region; it reads SWAPPQERSRAPLPPGNQDPAATPT.

It belongs to the DCP1 family. In terms of assembly, interacts with DCP1A.

Its subcellular location is the cytoplasm. The protein localises to the nucleus. The enzyme catalyses a 5'-end (N(7)-methyl 5'-triphosphoguanosine)-ribonucleoside in mRNA + H2O = N(7)-methyl-GDP + a 5'-end phospho-ribonucleoside in mRNA + 2 H(+). Its function is as follows. May play a role in the degradation of mRNAs, both in normal mRNA turnover and in nonsense-mediated mRNA decay. May remove the 7-methyl guanine cap structure from mRNA molecules, yielding a 5'-phosphorylated mRNA fragment and 7m-GDP. This Bos taurus (Bovine) protein is mRNA-decapping enzyme 1B (DCP1B).